Here is a 118-residue protein sequence, read N- to C-terminus: 5-hydroxyisourate hydrolase (118 aa).

The substrate site is built by His-7, Arg-46, and Tyr-115.

The protein belongs to the transthyretin family. 5-hydroxyisourate hydrolase subfamily. In terms of assembly, homotetramer.

It carries out the reaction 5-hydroxyisourate + H2O = 5-hydroxy-2-oxo-4-ureido-2,5-dihydro-1H-imidazole-5-carboxylate + H(+). Functionally, catalyzes the hydrolysis of 5-hydroxyisourate (HIU) to 2-oxo-4-hydroxy-4-carboxy-5-ureidoimidazoline (OHCU). The chain is 5-hydroxyisourate hydrolase from Brucella melitensis biotype 1 (strain ATCC 23456 / CCUG 17765 / NCTC 10094 / 16M).